The sequence spans 302 residues: Acetaldehyde dehydrogenase (302 aa).

12–15 lines the NAD(+) pocket; sequence SGNI. C127 acts as the Acyl-thioester intermediate in catalysis. Residues 158 to 166 and N276 each bind NAD(+); that span reads SAGPGTRQN.

This sequence belongs to the acetaldehyde dehydrogenase family.

It catalyses the reaction acetaldehyde + NAD(+) + CoA = acetyl-CoA + NADH + H(+). The protein is Acetaldehyde dehydrogenase (nahO) of Geobacillus genomosp. 3.